Reading from the N-terminus, the 495-residue chain is Ferruginol synthase (495 aa).

A topological domain (lumenal) is located at residue Met1. The helical transmembrane segment at 2 to 22 threads the bilayer; sequence DSFPLLAALFFIAATITFLSF. Over 23–495 the chain is Cytoplasmic; that stretch reads RRRRNLPPGP…PLRIIPIVKS (473 aa). Cys437 is a binding site for heme.

Belongs to the cytochrome P450 family. Requires heme as cofactor. Expression is more abundant in the rhizome.

Its subcellular location is the endoplasmic reticulum membrane. It carries out the reaction abieta-8,11,13-triene + reduced [NADPH--hemoprotein reductase] + O2 = ferruginol + oxidized [NADPH--hemoprotein reductase] + H2O + H(+). Cytochrome P450 enzyme (CYP) which catalyzes a unique two-electron oxidation cascade on abieta-8,11,13-triene to produce ferruginol, an intermediate in tanshinone biosynthesis. In Salvia miltiorrhiza (Chinese sage), this protein is Ferruginol synthase.